A 367-amino-acid chain; its full sequence is Histone RNA hairpin-binding protein (367 aa).

Positions 1–12 (MAQKTPTKGTRS) are enriched in polar residues. 2 disordered regions span residues 1–24 (MAQKTPTKGTRSSPRKKAWGSPIK) and 49–200 (EVTE…HWEE). A compositionally biased stretch (basic and acidic residues) spans 57–73 (LASRLEEERRCKSESRR). Polar residues predominate over residues 147 to 156 (SNASTINEGA). Low complexity predominate over residues 183 to 192 (SDSSSVASSP). The tract at residues 206-275 (CTDEAVLKRR…KWKRSLYEYC (70 aa)) is RNA-binding. A disordered region spans residues 342–367 (MDESTLKASTNTDPSAPTDFSKMSSH). Residues 347–356 (LKASTNTDPS) show a composition bias toward polar residues.

This sequence belongs to the SLBP family. In terms of processing, ubiquitinated by the CBC(fem-1) (Cul2-ElonginB-ElonginC) E3 ubiquitin-protein ligase complex, leading to its degradation.

In terms of biological role, involved in histone pre-mRNA 3' processing. Required for chromosome condensation, progression of cell death and morphogenesis. In Caenorhabditis elegans, this protein is Histone RNA hairpin-binding protein (cdl-1).